A 239-amino-acid chain; its full sequence is Endonuclease V (239 aa).

2 residues coordinate Mg(2+): aspartate 50 and aspartate 118.

It belongs to the endonuclease V family. Requires Mg(2+) as cofactor.

It is found in the cytoplasm. It catalyses the reaction Endonucleolytic cleavage at apurinic or apyrimidinic sites to products with a 5'-phosphate.. Its function is as follows. DNA repair enzyme involved in the repair of deaminated bases. Selectively cleaves double-stranded DNA at the second phosphodiester bond 3' to a deoxyinosine leaving behind the intact lesion on the nicked DNA. This is Endonuclease V from Xylella fastidiosa (strain 9a5c).